The chain runs to 685 residues: Putative alpha-1,3-mannosyltransferase MNN14 (685 aa).

Topologically, residues 1-13 (MGLLSIPYQSKSK) are cytoplasmic. A helical membrane pass occupies residues 14–34 (LWIAIFLVVWSLISMHFIWQS). The Lumenal segment spans residues 35 to 685 (QANSGLILKN…EIWMRGYNYL (651 aa)). N199, N338, N408, and N556 each carry an N-linked (GlcNAc...) asparagine glycan.

Belongs to the MNN1/MNT family.

The protein localises to the golgi apparatus membrane. It participates in protein modification; protein glycosylation. Responsible for addition of the terminal mannose residues to the outer chain of core N-linked polysaccharides and to O-linked mannotriose. Implicated in late Golgi modifications. Involved in virulence. In Candida albicans (strain SC5314 / ATCC MYA-2876) (Yeast), this protein is Putative alpha-1,3-mannosyltransferase MNN14 (MNN14).